Here is a 519-residue protein sequence, read N- to C-terminus: Aldehyde dehydrogenase, mitochondrial (519 aa).

Residues methionine 1–leucine 19 constitute a mitochondrion transit peptide. Residues glycine 12–alanine 26 carry the SIFI-degron motif. An N6-acetyllysine mark is found at lysine 54, lysine 75, lysine 80, and lysine 161. Glycine 264 to glycine 269 lines the NAD(+) pocket. Glutamate 287 (proton acceptor) is an active-site residue. Residue cysteine 321 is the Nucleophile of the active site. N6-acetyllysine occurs at positions 370, 377, 385, 409, 428, 430, 443, and 453.

Belongs to the aldehyde dehydrogenase family. Homotetramer. Post-translationally, in response to mitochondrial stress, the precursor protein is ubiquitinated by the SIFI complex in the cytoplasm before mitochondrial import, leading to its degradation. Within the SIFI complex, UBR4 initiates ubiquitin chain that are further elongated or branched by KCMF1.

It localises to the mitochondrion matrix. It catalyses the reaction an aldehyde + NAD(+) + H2O = a carboxylate + NADH + 2 H(+). It participates in alcohol metabolism; ethanol degradation; acetate from ethanol: step 2/2. Its function is as follows. Required for clearance of cellular formaldehyde, a cytotoxic and carcinogenic metabolite that induces DNA damage. The polypeptide is Aldehyde dehydrogenase, mitochondrial (Aldh2) (Rattus norvegicus (Rat)).